We begin with the raw amino-acid sequence, 291 residues long: Ribosome maturation factor RimP (291 aa).

The interval 188 to 291 (ERGLGEDEEF…GGKPKAKETH (104 aa)) is disordered. The span at 193–211 (EDEEFEDDADEVFEGDEAD) shows a compositional bias: acidic residues. Basic and acidic residues-rich tracts occupy residues 212-237 (EKAAKDAANAERANAKKAADKAEKRA) and 245-254 (AKSEKAEKSQ).

This sequence belongs to the RimP family.

It localises to the cytoplasm. Required for maturation of 30S ribosomal subunits. This is Ribosome maturation factor RimP from Azorhizobium caulinodans (strain ATCC 43989 / DSM 5975 / JCM 20966 / LMG 6465 / NBRC 14845 / NCIMB 13405 / ORS 571).